The primary structure comprises 571 residues: Phosphomethylpyrimidine synthase (571 aa).

Substrate is bound by residues asparagine 201, methionine 230, tyrosine 259, histidine 295, serine 315–glycine 317, aspartate 356–arginine 359, and glutamate 395. Histidine 399 is a binding site for Zn(2+). Tyrosine 422 serves as a coordination point for substrate. Histidine 463 serves as a coordination point for Zn(2+). Cysteine 545, cysteine 548, and cysteine 553 together coordinate [4Fe-4S] cluster.

The protein belongs to the ThiC family. [4Fe-4S] cluster is required as a cofactor.

The catalysed reaction is 5-amino-1-(5-phospho-beta-D-ribosyl)imidazole + S-adenosyl-L-methionine = 4-amino-2-methyl-5-(phosphooxymethyl)pyrimidine + CO + 5'-deoxyadenosine + formate + L-methionine + 3 H(+). The protein operates within cofactor biosynthesis; thiamine diphosphate biosynthesis. Its function is as follows. Catalyzes the synthesis of the hydroxymethylpyrimidine phosphate (HMP-P) moiety of thiamine from aminoimidazole ribotide (AIR) in a radical S-adenosyl-L-methionine (SAM)-dependent reaction. The chain is Phosphomethylpyrimidine synthase from Chlorobium phaeovibrioides (strain DSM 265 / 1930) (Prosthecochloris vibrioformis (strain DSM 265)).